A 426-amino-acid chain; its full sequence is Glucose-1-phosphate adenylyltransferase (426 aa).

Alpha-D-glucose 1-phosphate contacts are provided by residues glycine 165, 180–181 (EK), and serine 191.

It belongs to the bacterial/plant glucose-1-phosphate adenylyltransferase family. Homotetramer.

It carries out the reaction alpha-D-glucose 1-phosphate + ATP + H(+) = ADP-alpha-D-glucose + diphosphate. The protein operates within glycan biosynthesis; glycogen biosynthesis. Involved in the biosynthesis of ADP-glucose, a building block required for the elongation reactions to produce glycogen. Catalyzes the reaction between ATP and alpha-D-glucose 1-phosphate (G1P) to produce pyrophosphate and ADP-Glc. The chain is Glucose-1-phosphate adenylyltransferase from Ruminiclostridium cellulolyticum (strain ATCC 35319 / DSM 5812 / JCM 6584 / H10) (Clostridium cellulolyticum).